The chain runs to 542 residues: Leucine-rich repeat-containing protein 56 (542 aa).

5 LRR repeats span residues 94–115 (NLDQ…GTSL), 117–138 (HLQV…ASLP), 139–160 (ALKE…CLLE), 161–182 (QLEV…RYLQ), and 186–206 (RLAM…PGPT). In terms of domain architecture, LRRCT spans 207 to 250 (NKVPRGYNYRAEVRKLIPQLQVLDEVPAAHTGPPAPPRLSQDWL). 3 disordered regions span residues 308–377 (LLSE…ADSS), 396–475 (LPYR…LQSR), and 507–542 (RLSP…PVPT). Residues 416 to 426 (RVPEEQVHQAE) show a composition bias toward basic and acidic residues. Residues 522-532 (PDAAARPPRAA) are compositionally biased toward low complexity.

The protein belongs to the LRRC56 family. As to quaternary structure, interacts with IFT88.

The protein localises to the cell projection. It is found in the cilium. Its function is as follows. Required for the assembly of dynein arms. The polypeptide is Leucine-rich repeat-containing protein 56 (LRRC56) (Homo sapiens (Human)).